Reading from the N-terminus, the 272-residue chain is Pyridoxal phosphate phosphatase YbhA (272 aa).

D9 functions as the Nucleophile in the catalytic mechanism. Position 9 (D9) interacts with Mg(2+). L10 provides a ligand contact to phosphate. Position 11 (D11) interacts with Mg(2+). Phosphate contacts are provided by residues 43–44 and K200; that span reads TG. Position 223 (D223) interacts with Mg(2+). N226 is a phosphate binding site.

The protein belongs to the HAD-like hydrolase superfamily. CbbY/CbbZ/Gph/YieH family. The cofactor is Mg(2+). Requires Mn(2+) as cofactor. Co(2+) is required as a cofactor. Zn(2+) serves as cofactor.

The enzyme catalyses pyridoxal 5'-phosphate + H2O = pyridoxal + phosphate. Catalyzes the dephosphorylation of pyridoxal-phosphate (PLP). Can also hydrolyze erythrose-4-phosphate (Ery4P) and fructose-1,6-bis-phosphate (Fru1,6bisP). The sequence is that of Pyridoxal phosphate phosphatase YbhA (ybhA) from Escherichia coli (strain K12).